Consider the following 205-residue polypeptide: Pyridoxal 5'-phosphate synthase subunit PdxT (205 aa).

52-54 (GES) serves as a coordination point for L-glutamine. The active-site Nucleophile is Cys84. Residues Arg116 and 145 to 146 (IR) contribute to the L-glutamine site. Active-site charge relay system residues include His185 and Glu187.

This sequence belongs to the glutaminase PdxT/SNO family. As to quaternary structure, in the presence of PdxS, forms a dodecamer of heterodimers. Only shows activity in the heterodimer.

The catalysed reaction is aldehydo-D-ribose 5-phosphate + D-glyceraldehyde 3-phosphate + L-glutamine = pyridoxal 5'-phosphate + L-glutamate + phosphate + 3 H2O + H(+). It catalyses the reaction L-glutamine + H2O = L-glutamate + NH4(+). The protein operates within cofactor biosynthesis; pyridoxal 5'-phosphate biosynthesis. Its function is as follows. Catalyzes the hydrolysis of glutamine to glutamate and ammonia as part of the biosynthesis of pyridoxal 5'-phosphate. The resulting ammonia molecule is channeled to the active site of PdxS. This is Pyridoxal 5'-phosphate synthase subunit PdxT from Staphylothermus marinus (strain ATCC 43588 / DSM 3639 / JCM 9404 / F1).